A 286-amino-acid polypeptide reads, in one-letter code: Beta-lactamase SHV-13 (286 aa).

Residues 1-21 (MRYIRLCIISLLATLPLAVHA) form the signal peptide. Ser66 (acyl-ester intermediate) is an active-site residue. Cys73 and Cys119 are joined by a disulfide. Catalysis depends on Glu164, which acts as the Proton acceptor. 230 to 232 (KTG) is a substrate binding site.

Belongs to the class-A beta-lactamase family.

The catalysed reaction is a beta-lactam + H2O = a substituted beta-amino acid. Inhibited 16-fold better by the beta-lactamase inhibitor clavulanic acid than by tazobactam. Functionally, broad spectrum beta-lactamase which hydrolyzes penicillins, as well as cephalosporins except cephamycins. Also hydrolyzes aztreonam, but not imipenem. Confers highly resistance to ceftazidime, cefotaxime, aztreonam and piperacillin. The chain is Beta-lactamase SHV-13 (bla) from Klebsiella pneumoniae.